Here is a 242-residue protein sequence, read N- to C-terminus: MSKTILIADDEPEIIELLKLFLERESYRIIEAYDGEQAWNYIRQHPVDLAIIDIMMPALDGFQLIKRLTNEYKLPVIILSAKNRDSDKILGLGLGADDFISKPFNPLEAVARIQAQLRRAFEFNEPEEKAISTQSTTVGRLTLLHTACVVYRGDETYSVTPLEYRLLNTFMQCSRTSIFTKQQLFEQAWSETYWEDDNTIMVQISRLRDKIEDQPRQPVYIKTVRGLGYKFASKDDFDEEKT.

Residues 4 to 117 (TILIADDEPE…EAVARIQAQL (114 aa)) form the Response regulatory domain. At Asp53 the chain carries 4-aspartylphosphate. A DNA-binding region (ompR/PhoB-type) is located at residues 133–233 (TQSTTVGRLT…VRGLGYKFAS (101 aa)).

Phosphorylated by GtcS.

Member of the two-component regulatory system GtcS/GtcR which may act in the control of the transcription of the grs operon which encodes the multienzymes involved in the biosynthesis of the peptide antibiotic gramicidin S. The protein is Response regulator GtcR (gtcR) of Aneurinibacillus migulanus (Bacillus migulanus).